Here is a 226-residue protein sequence, read N- to C-terminus: 2-C-methyl-D-erythritol 4-phosphate cytidylyltransferase (226 aa).

Belongs to the IspD/TarI cytidylyltransferase family. IspD subfamily.

The catalysed reaction is 2-C-methyl-D-erythritol 4-phosphate + CTP + H(+) = 4-CDP-2-C-methyl-D-erythritol + diphosphate. It functions in the pathway isoprenoid biosynthesis; isopentenyl diphosphate biosynthesis via DXP pathway; isopentenyl diphosphate from 1-deoxy-D-xylulose 5-phosphate: step 2/6. Its function is as follows. Catalyzes the formation of 4-diphosphocytidyl-2-C-methyl-D-erythritol from CTP and 2-C-methyl-D-erythritol 4-phosphate (MEP). The polypeptide is 2-C-methyl-D-erythritol 4-phosphate cytidylyltransferase (Trichodesmium erythraeum (strain IMS101)).